A 247-amino-acid chain; its full sequence is Cell division protein ZapD (247 aa).

The protein belongs to the ZapD family. Interacts with FtsZ.

The protein resides in the cytoplasm. Its function is as follows. Cell division factor that enhances FtsZ-ring assembly. Directly interacts with FtsZ and promotes bundling of FtsZ protofilaments, with a reduction in FtsZ GTPase activity. The sequence is that of Cell division protein ZapD from Escherichia coli O17:K52:H18 (strain UMN026 / ExPEC).